Here is a 606-residue protein sequence, read N- to C-terminus: Glutamine--fructose-6-phosphate aminotransferase [isomerizing] (606 aa).

Residue cysteine 2 is the Nucleophile; for GATase activity of the active site. The Glutamine amidotransferase type-2 domain maps to cysteine 2–aspartate 217. 2 SIS domains span residues tyrosine 284–tyrosine 423 and leucine 455–proline 596. Lysine 601 serves as the catalytic For Fru-6P isomerization activity.

As to quaternary structure, homodimer.

The protein resides in the cytoplasm. The enzyme catalyses D-fructose 6-phosphate + L-glutamine = D-glucosamine 6-phosphate + L-glutamate. Its function is as follows. Catalyzes the first step in hexosamine metabolism, converting fructose-6P into glucosamine-6P using glutamine as a nitrogen source. The protein is Glutamine--fructose-6-phosphate aminotransferase [isomerizing] of Thermotoga maritima (strain ATCC 43589 / DSM 3109 / JCM 10099 / NBRC 100826 / MSB8).